Reading from the N-terminus, the 1044-residue chain is Elongation factor 3B (1044 aa).

Serine 2 carries the post-translational modification N-acetylserine. Residues 5–42 (QQSITVLEELFRKLETATSETREGISSELSSFLNGNII) form an HEAT 1 repeat. Residues isoleucine 42, histidine 44, and serine 83 each contribute to the ADP site. HEAT repeat units lie at residues 86–123 (PYIVATVPSVCSKAGSKDNDVQLAATKALKAIASAVNP), 124–162 (VAVKALLPHLIHSLETSNKWKEKVAVLEVISVLVDAAKE), 166–203 (LRMPELIPVLSESMWDTKKGVKEAATTTITKATETVDN), 205–241 (DIERFIPKLIECIANPNEVPETVHLLGATTFVAEVTP), 242–279 (ATLSIMVPLLSRGLAERETSIKRKAAVIIDNMCKLVED), and 285–323 (PFLGKLLPGLKNNFATIADPEAREVTLKALKTLRRVGNV). N6,N6,N6-trimethyllysine is present on residues lysine 187 and lysine 196. ADP-binding residues include threonine 392, histidine 396, and glutamate 397. ABC transporter domains are found at residues 426–641 (DEGE…YYEL) and 667–993 (VKVS…KKEE). Asparagine 703 contributes to the ADP binding site. Lysine 789 is modified (N6,N6,N6-trimethyllysine). The ADP site is built by glutamate 922, asparagine 925, and histidine 951. The residue at position 972 (threonine 972) is a Phosphothreonine. Serine 974 carries the phosphoserine modification. The segment at 975 to 1044 (GHNWVAGQGA…DEYVSSDEDF (70 aa)) is disordered. Positions 987 to 999 (RIEKKEEEGDKFD) are enriched in basic and acidic residues. A compositionally biased stretch (basic residues) spans 1020–1031 (RKKKKERMKKKK). Residues serine 1039 and serine 1040 each carry the phosphoserine modification.

The protein belongs to the ABC transporter superfamily. ABCF family. EF3 subfamily. Monomer.

The protein resides in the cytoplasm. The catalysed reaction is ATP + H2O = ADP + phosphate + H(+). The protein operates within protein biosynthesis; polypeptide chain elongation. Functionally, ribosome-dependent ATPase that promotes the translation of proteins required for detoxification of reactive oxygen species. Required for the ATP-dependent release of deacylated tRNA from the ribosomal E-site during protein biosynthesis. Stimulates the eEF1A-dependent binding of aminoacyl-tRNA to the ribosomal A-site, which has reduced affinity for tRNA as long as the E-site is occupied. Assists translation termination by stimulating the release of nascent protein from the ribosome by release factors. This chain is Elongation factor 3B, found in Saccharomyces cerevisiae (strain ATCC 204508 / S288c) (Baker's yeast).